Reading from the N-terminus, the 177-residue chain is MSRVAKAPVSVPAGVEVKLDGQLLTVKGKNGELTRTIHNFVEVKQDNNELTFSPRNDGAEANAQAGTTRALVNAMVIGVTEGFTKKLQLVGVGYRAQVKGNVVNLSLGFSHPVEHTLPAGITAECPSQTEIVLKGADKQLIGQVAADIRAYRSPEPYKGKGVRYSDEVVRTKEAKKK.

Belongs to the universal ribosomal protein uL6 family. In terms of assembly, part of the 50S ribosomal subunit.

This protein binds to the 23S rRNA, and is important in its secondary structure. It is located near the subunit interface in the base of the L7/L12 stalk, and near the tRNA binding site of the peptidyltransferase center. The chain is Large ribosomal subunit protein uL6 from Mannheimia succiniciproducens (strain KCTC 0769BP / MBEL55E).